The primary structure comprises 652 residues: Probable potassium transport system protein Kup (652 aa).

The span at 1–20 shows a compositional bias: low complexity; sequence MSNDTSPGTSSVDSKSSDPS. Residues 1–26 are disordered; it reads MSNDTSPGTSSVDSKSSDPSYGVPGH. A run of 12 helical transmembrane segments spans residues 36–56, 76–96, 125–145, 161–181, 193–213, 228–248, 270–290, 314–334, 362–382, 391–411, 419–439, and 444–464; these read LSLG…LYAL, LVSL…VMFI, WLIV…MITP, PSFD…LFCI, FGPI…FNII, AIHF…SVVL, LGWY…QCAL, LIIL…TGAF, IYIP…IAMF, AYGI…GVLV, AWQS…FFLS, and IPEG…MLMT.

It belongs to the HAK/KUP transporter (TC 2.A.72) family.

The protein resides in the cell inner membrane. The enzyme catalyses K(+)(in) + H(+)(in) = K(+)(out) + H(+)(out). Transport of potassium into the cell. Likely operates as a K(+):H(+) symporter. The sequence is that of Probable potassium transport system protein Kup from Zymomonas mobilis subsp. mobilis (strain ATCC 31821 / ZM4 / CP4).